The following is a 208-amino-acid chain: Ribosomal RNA large subunit methyltransferase E (208 aa).

5 residues coordinate S-adenosyl-L-methionine: Gly62, Trp64, Asp82, Asp98, and Asp123. Residue Lys163 is the Proton acceptor of the active site.

It belongs to the class I-like SAM-binding methyltransferase superfamily. RNA methyltransferase RlmE family.

The protein resides in the cytoplasm. It catalyses the reaction uridine(2552) in 23S rRNA + S-adenosyl-L-methionine = 2'-O-methyluridine(2552) in 23S rRNA + S-adenosyl-L-homocysteine + H(+). Functionally, specifically methylates the uridine in position 2552 of 23S rRNA at the 2'-O position of the ribose in the fully assembled 50S ribosomal subunit. The polypeptide is Ribosomal RNA large subunit methyltransferase E (Actinobacillus succinogenes (strain ATCC 55618 / DSM 22257 / CCUG 43843 / 130Z)).